We begin with the raw amino-acid sequence, 217 residues long: Cytidylate kinase (217 aa).

ATP is bound at residue 11 to 19 (GPAGAGKST).

Belongs to the cytidylate kinase family. Type 1 subfamily.

It is found in the cytoplasm. The enzyme catalyses CMP + ATP = CDP + ADP. The catalysed reaction is dCMP + ATP = dCDP + ADP. This is Cytidylate kinase from Clostridium perfringens (strain ATCC 13124 / DSM 756 / JCM 1290 / NCIMB 6125 / NCTC 8237 / Type A).